Consider the following 278-residue polypeptide: Lipoyl-[GcvH]:protein N-lipoyltransferase (278 aa).

One can recognise a BPL/LPL catalytic domain in the interval 44 to 250 (RMAPSTVRGW…SLRHYAGDLV (207 aa)). The active-site Acyl-thioester intermediate is Cys149.

This sequence belongs to the octanoyltransferase LipL family.

The catalysed reaction is N(6)-[(R)-lipoyl]-L-lysyl-[glycine-cleavage complex H protein] + L-lysyl-[lipoyl-carrier protein] = L-lysyl-[glycine-cleavage complex H protein] + N(6)-[(R)-lipoyl]-L-lysyl-[lipoyl-carrier protein]. It functions in the pathway protein modification; protein lipoylation via exogenous pathway. Catalyzes the amidotransfer (transamidation) of the lipoyl moiety from lipoyl-GcvH to the lipoyl domain of the E2 subunit of lipoate-dependent enzymes. Takes part in a pathway for scavenging of lipoic acid derived from eukaryotic host cells. Cannot use lipoyl-tripeptide (DK(L)A), lipoamide (LD), or free lipoate as substrate. This is Lipoyl-[GcvH]:protein N-lipoyltransferase from Listeria monocytogenes serovar 1/2a (strain ATCC BAA-679 / EGD-e).